The following is an 88-amino-acid chain: Alpha-latrotoxin-associated low molecular weight protein (88 aa).

A signal peptide spans 1–18; sequence MSKLFFVVFLCLIISVFA.

This sequence belongs to the arthropod CHH/MIH/GIH/VIH hormone family. In terms of tissue distribution, expressed by the venom gland.

The protein localises to the secreted. Functionally, may increase the toxicity of alpha-latrotoxin and/or other venom components. Is non-toxic to mice and to the cockroach Periplaneta americana. This chain is Alpha-latrotoxin-associated low molecular weight protein, found in Latrodectus tredecimguttatus (Mediterranean black widow spider).